Consider the following 166-residue polypeptide: Interferon gamma (166 aa).

Positions 1–23 are cleaved as a signal peptide; the sequence is MKYTSYILAFQLCIVLGSLGCYC. Glutamine 24 is subject to Pyrrolidone carboxylic acid. The N-linked (GlcNAc...) asparagine glycan is linked to asparagine 48. Asparagine 120 carries an N-linked (GlcNAc...) asparagine; in dimeric form glycan. Residues 147 to 166 are disordered; the sequence is AKTGKRKRSQMLFRGRRASQ. Basic residues predominate over residues 149 to 166; that stretch reads TGKRKRSQMLFRGRRASQ. Positions 162 to 166 are excised as a propeptide; sequence RRASQ.

It belongs to the type II (or gamma) interferon family. As to quaternary structure, homodimer. Interacts with IFNGR1 (via extracellular domain); this interaction promotes IFNGR1 dimerization. Post-translationally, proteolytic processing produces C-terminal heterogeneity, with proteins ending alternatively at Gly-150, Met-157 or Gly-161. In terms of tissue distribution, released primarily from activated T lymphocytes.

It localises to the secreted. In terms of biological role, type II interferon produced by immune cells such as T-cells and NK cells that plays crucial roles in antimicrobial, antiviral, and antitumor responses by activating effector immune cells and enhancing antigen presentation. Primarily signals through the JAK-STAT pathway after interaction with its receptor IFNGR1 to affect gene regulation. Upon IFNG binding, IFNGR1 intracellular domain opens out to allow association of downstream signaling components JAK2, JAK1 and STAT1, leading to STAT1 activation, nuclear translocation and transcription of IFNG-regulated genes. Many of the induced genes are transcription factors such as IRF1 that are able to further drive regulation of a next wave of transcription. Plays a role in class I antigen presentation pathway by inducing a replacement of catalytic proteasome subunits with immunoproteasome subunits. In turn, increases the quantity, quality, and repertoire of peptides for class I MHC loading. Increases the efficiency of peptide generation also by inducing the expression of activator PA28 that associates with the proteasome and alters its proteolytic cleavage preference. Up-regulates as well MHC II complexes on the cell surface by promoting expression of several key molecules such as cathepsins B/CTSB, H/CTSH, and L/CTSL. Participates in the regulation of hematopoietic stem cells during development and under homeostatic conditions by affecting their development, quiescence, and differentiation. In Homo sapiens (Human), this protein is Interferon gamma (IFNG).